The chain runs to 467 residues: Uronate isomerase (467 aa).

This sequence belongs to the metallo-dependent hydrolases superfamily. Uronate isomerase family.

It catalyses the reaction D-glucuronate = D-fructuronate. The catalysed reaction is aldehydo-D-galacturonate = keto-D-tagaturonate. Its pathway is carbohydrate metabolism; pentose and glucuronate interconversion. In Streptococcus uberis (strain ATCC BAA-854 / 0140J), this protein is Uronate isomerase.